We begin with the raw amino-acid sequence, 122 residues long: Flagellar protein FliT (122 aa).

Residues 1–50 (MTSTVEFINRWQRIALLSQSLLELAQRGEWDLLLQQEVSYLQRIETVMEK) are required for homodimerization. The tract at residues 60–98 (IQDMVAGYIKQTLDNEQLLKGLLQQRLDELSSLIGQSTR) is fliD binding.

It belongs to the FliT family. In terms of assembly, homodimer. Interacts with FliD and FlhC.

It localises to the cytoplasm. Its subcellular location is the cytosol. Its function is as follows. Dual-function protein that regulates the transcription of class 2 flagellar operons and that also acts as an export chaperone for the filament-capping protein FliD. As a transcriptional regulator, acts as an anti-FlhDC factor; it directly binds FlhC, thus inhibiting the binding of the FlhC/FlhD complex to class 2 promoters, resulting in decreased expression of class 2 flagellar operons. As a chaperone, effects FliD transition to the membrane by preventing its premature polymerization, and by directing it to the export apparatus. The sequence is that of Flagellar protein FliT from Salmonella paratyphi A (strain AKU_12601).